Here is a 465-residue protein sequence, read N- to C-terminus: ATP synthase subunit beta (465 aa).

Gly-152–Thr-159 provides a ligand contact to ATP.

The protein belongs to the ATPase alpha/beta chains family. As to quaternary structure, F-type ATPases have 2 components, CF(1) - the catalytic core - and CF(0) - the membrane proton channel. CF(1) has five subunits: alpha(3), beta(3), gamma(1), delta(1), epsilon(1). CF(0) has three main subunits: a(1), b(2) and c(9-12). The alpha and beta chains form an alternating ring which encloses part of the gamma chain. CF(1) is attached to CF(0) by a central stalk formed by the gamma and epsilon chains, while a peripheral stalk is formed by the delta and b chains.

The protein localises to the cell inner membrane. It catalyses the reaction ATP + H2O + 4 H(+)(in) = ADP + phosphate + 5 H(+)(out). Its function is as follows. Produces ATP from ADP in the presence of a proton gradient across the membrane. The catalytic sites are hosted primarily by the beta subunits. In Campylobacter hominis (strain ATCC BAA-381 / DSM 21671 / CCUG 45161 / LMG 19568 / NCTC 13146 / CH001A), this protein is ATP synthase subunit beta.